We begin with the raw amino-acid sequence, 691 residues long: WD repeat-containing protein 48 homolog (691 aa).

8 WD repeats span residues 27–82 (LHRS…PVQY), 88–130 (RHTD…YLDS), 133–168 (LHTD…NSNF), 180–219 (GCKN…KPMK), 222–261 (GHSD…NIAT), 264–303 (AHEE…KFQV), 306–347 (KEEA…QNSN), and 399–438 (SGAP…KVKE).

The protein belongs to the WD repeat WDR48 family. As to quaternary structure, interacts with usp-46; the interaction increases the catalytic activity of usp-46 in the presence of wdr-20.

Its function is as follows. Together with wdr-20, binds to and stimulates the activity of the deubiquitinating enzyme usp-46, leading to deubiquitination and stabilization of the glr-1 glutamate receptor. This is WD repeat-containing protein 48 homolog (wdr-48) from Caenorhabditis briggsae.